The chain runs to 524 residues: Dihydromonacolin L monooxygenase mokC (524 aa).

The Cytoplasmic segment spans residues 1-25 (MTVPTDTVSRRLQSLAWSDIKQHAP). The helical; Signal-anchor for type II membrane protein transmembrane segment at 26–47 (WLPSSRTLVSGFLCLILLQILY) threads the bilayer. The Lumenal segment spans residues 48 to 524 (SRGRKSDLRV…LMMRRRDEDL (477 aa)). N-linked (GlcNAc...) asparagine glycosylation is found at N396 and N401. C467 is a binding site for heme.

Belongs to the cytochrome P450 family. Heme is required as a cofactor.

It is found in the endoplasmic reticulum membrane. The catalysed reaction is dihydromonacolin L carboxylate + reduced [NADPH--hemoprotein reductase] + O2 = monacolin L carboxylate + oxidized [NADPH--hemoprotein reductase] + 2 H2O + H(+). It carries out the reaction monacolin L carboxylate + reduced [NADPH--hemoprotein reductase] + O2 = monacolin J carboxylate + oxidized [NADPH--hemoprotein reductase] + H2O + H(+). It functions in the pathway polyketide biosynthesis; lovastatin biosynthesis. Functionally, cytochrome P450 monooxygenase; part of the gene cluster that mediates the biosynthesis of monakolin K, also known as lovastatin, and which acts as a potent competitive inhibitor of HMG-CoA reductase. Monakolin K biosynthesis is performed in two stages. The first stage is catalyzed by the nonaketide synthase mokA, which belongs to type I polyketide synthases and catalyzes the iterative nine-step formation of the polyketide. This PKS stage is completed by the action of dehydrogenase mokE, which catalyzes the NADPH-dependent reduction of the unsaturated tetra-, penta- and heptaketide intermediates that arise during the mokA-mediated biosynthesis of the nonaketide chain and leads to dihydromonacolin L. Covalently bound dihydromonacolin L is released from mokA by the mokD esterase. Conversion of dihydromonacolin L into monacolin L and then monacolin J is subsequently performed with the participation of molecular oxygen and P450 monoogygenase mokC. Finally, mokF performs the conversion of monacoline J to monacoline K through the addition of the side-chain diketide moiety (2R)-2-methylbutanoate produced by the diketide synthase mokB. This chain is Dihydromonacolin L monooxygenase mokC, found in Monascus pilosus (Red mold).